A 226-amino-acid polypeptide reads, in one-letter code: Ribonuclease 3 (226 aa).

In terms of domain architecture, RNase III spans 4–127 (LEEFEKKLGY…VMGAIYLEKG (124 aa)). E40 lines the Mg(2+) pocket. D44 is a catalytic residue. N113 and E116 together coordinate Mg(2+). The active site involves E116. The DRBM domain maps to 154–223 (DFKTALQEFT…AKEALKILKA (70 aa)).

The protein belongs to the ribonuclease III family. Homodimer. Mg(2+) is required as a cofactor.

It is found in the cytoplasm. It catalyses the reaction Endonucleolytic cleavage to 5'-phosphomonoester.. Its function is as follows. Digests double-stranded RNA. Involved in the processing of primary rRNA transcript to yield the immediate precursors to the large and small rRNAs (23S and 16S). Processes some mRNAs, and tRNAs when they are encoded in the rRNA operon. Processes pre-crRNA and tracrRNA of type II CRISPR loci if present in the organism. The sequence is that of Ribonuclease 3 from Nitratiruptor sp. (strain SB155-2).